Here is a 163-residue protein sequence, read N- to C-terminus: Protein-export protein SecB (163 aa).

Belongs to the SecB family. In terms of assembly, homotetramer, a dimer of dimers. One homotetramer interacts with 1 SecA dimer.

The protein resides in the cytoplasm. One of the proteins required for the normal export of preproteins out of the cell cytoplasm. It is a molecular chaperone that binds to a subset of precursor proteins, maintaining them in a translocation-competent state. It also specifically binds to its receptor SecA. The polypeptide is Protein-export protein SecB (Burkholderia ambifaria (strain MC40-6)).